The chain runs to 177 residues: CCHC-type zinc finger nucleic acid binding protein (177 aa).

Ser2 bears the N-acetylserine mark. A CCHC-type 1 zinc finger spans residues 4–21 (NECFKCGRSGHWARECPT). Lys8 is subject to N6-acetyllysine. 2 positions are modified to omega-N-methylarginine; by PRMT1: Arg25 and Arg27. Residues 25–38 (RGRGMRSRGRGGFT) are RNA-binding Arg/Gly-rich region (RGG-box). An omega-N-methylarginine mark is found at Arg32 and Arg34. Ser49 carries the phosphoserine modification. CCHC-type zinc fingers lie at residues 52-69 (DICY…DCDL), 72-89 (DACY…DCKE), 96-113 (QCCY…DCDH), 117-134 (QKCY…DCTK), 135-152 (VKCY…NCSK), and 156-173 (VNCY…ECTI). Omega-N-methylarginine is present on residues Ala73, Arg79, and Gly80.

Associates with the 40S ribosomal subunit, the 80S ribosome and with polysomes. Post-translationally, arginine methylation by PRMT1 in the Arg/Gly-rich region impedes RNA binding. Expressed in the liver, kidney, spleen, testis, lung, muscle and adrenal glands.

It localises to the nucleus. It is found in the cytoplasm. The protein resides in the endoplasmic reticulum. Its function is as follows. Single-stranded DNA-binding protein that preferentially binds to the sterol regulatory element (SRE) sequence 5'-GTGCGGTG-3', and thereby mediates transcriptional repression. Has a role as transactivator of the Myc promoter. Binds single-stranded RNA in a sequence-specific manner. In terms of biological role, binds G-rich elements in target mRNA coding sequences. Prevents G-quadruplex structure formation in vitro, suggesting a role in supporting translation by resolving stable structures on mRNAs. Functionally, binds to RNA. The sequence is that of CCHC-type zinc finger nucleic acid binding protein from Homo sapiens (Human).